Here is a 283-residue protein sequence, read N- to C-terminus: Shikimate dehydrogenase (NADP(+)) (283 aa).

Shikimate is bound by residues 16-18 (SLS) and Thr63. Lys67 acts as the Proton acceptor in catalysis. Asp79 contacts NADP(+). The shikimate site is built by Asn88 and Asp103. NADP(+) is bound by residues 128–132 (GAGGA), Ala223, and Gly243.

Belongs to the shikimate dehydrogenase family. Homodimer.

It carries out the reaction shikimate + NADP(+) = 3-dehydroshikimate + NADPH + H(+). The protein operates within metabolic intermediate biosynthesis; chorismate biosynthesis; chorismate from D-erythrose 4-phosphate and phosphoenolpyruvate: step 4/7. Involved in the biosynthesis of the chorismate, which leads to the biosynthesis of aromatic amino acids. Catalyzes the reversible NADPH linked reduction of 3-dehydroshikimate (DHSA) to yield shikimate (SA). This Xanthomonas campestris pv. campestris (strain 8004) protein is Shikimate dehydrogenase (NADP(+)).